A 380-amino-acid chain; its full sequence is E3 ubiquitin-protein ligase Iruka (380 aa).

The interval 50–92 (APEMDSSTAGASGSARSGSSGSGSSGSHDTLSRGSSSSGSQVN) is disordered. Low complexity-rich tracts occupy residues 55-68 (SSTA…RSGS) and 74-89 (SGSH…SSGS). Residues 253 to 294 (CSICWDDFKIDETVRKLPCSHLYHENCIVPWLNLHSTCPICR) form an RING-type; atypical zinc finger. A disordered region spans residues 317–367 (EMAADGSNSERRSASTATGTDNPSPANNPSQAAAEGGRTRPDANPAQAARN). Over residues 338–350 (NPSPANNPSQAAA) the composition is skewed to low complexity.

As to quaternary structure, interacts (via N-terminus) with CG7546 (via Ubl domain).

The catalysed reaction is S-ubiquitinyl-[E2 ubiquitin-conjugating enzyme]-L-cysteine + [acceptor protein]-L-lysine = [E2 ubiquitin-conjugating enzyme]-L-cysteine + N(6)-ubiquitinyl-[acceptor protein]-L-lysine.. It participates in protein modification; protein ubiquitination. E3 ubiquitin-protein ligase that mediates E2-dependent, 'Lys-48'- and/or 'Lys-63'-linked polyubiquitination of substrates. Recognizes miRNA-empty Ago1 and triggers its degradation via polyubiquitination independently of the Bag6 complex. By targeting miRNA-empty Ago1, eliminates dysfunctional Ago1 not able to bind miRNA and thereby plays a role in the quality control of miRNA-mediated silencing. In Drosophila melanogaster (Fruit fly), this protein is E3 ubiquitin-protein ligase Iruka.